The chain runs to 188 residues: Elongation factor P (188 aa).

The residue at position 34 (lysine 34) is an N6-(3,6-diaminohexanoyl)-5-hydroxylysine.

This sequence belongs to the elongation factor P family. Post-translationally, may be beta-lysylated on the epsilon-amino group of Lys-34 by the combined action of EpmA and EpmB, and then hydroxylated on the C5 position of the same residue by EpmC (if this protein is present). Lysylation is critical for the stimulatory effect of EF-P on peptide-bond formation. The lysylation moiety may extend toward the peptidyltransferase center and stabilize the terminal 3-CCA end of the tRNA. Hydroxylation of the C5 position on Lys-34 may allow additional potential stabilizing hydrogen-bond interactions with the P-tRNA.

The protein resides in the cytoplasm. It functions in the pathway protein biosynthesis; polypeptide chain elongation. Its function is as follows. Involved in peptide bond synthesis. Alleviates ribosome stalling that occurs when 3 or more consecutive Pro residues or the sequence PPG is present in a protein, possibly by augmenting the peptidyl transferase activity of the ribosome. Modification of Lys-34 is required for alleviation. The sequence is that of Elongation factor P from Vibrio atlanticus (strain LGP32) (Vibrio splendidus (strain Mel32)).